Here is a 337-residue protein sequence, read N- to C-terminus: Schlafen family member 1 (337 aa).

A disordered region spans residues 147-166 (AGGRSPSARPSDRPGDDTQE). Residues 156–166 (PSDRPGDDTQE) show a composition bias toward basic and acidic residues.

This sequence belongs to the Schlafen family. As to quaternary structure, interacts with DNAJB6; promoting nuclear translocation and ability to promote cell-cycle arrest. In terms of tissue distribution, mainly expressed in the thymus, lymph node and spleen. Specifically expressed in T-lineage cells, but not in B-cells. Strongly up-regulated during the differentiation from CD4(+)CD8(+) double-positive (DP) to CD4(+) or CD8(+) single-positive (SP) thymocytes. Highly expressed in quiescent single-positive thymocytes and T-cells. The expression substantially decreases after TCR (T-cell receptor)-mediated activation.

Its subcellular location is the cytoplasm. It localises to the nucleus. Protein expressed in resting T-cells, which is required for maintaining T-cells in the quiescent state. Acts by promoting cell-cycle arrest of T-cells through inhibiting the expression of cyclin-D1 (CCND1). In Mus musculus (Mouse), this protein is Schlafen family member 1.